Here is a 120-residue protein sequence, read N- to C-terminus: C-C motif chemokine 16 (120 aa).

The first 23 residues, 1 to 23 (MKVSEAALSLLVLILIITSASRS), serve as a signal peptide directing secretion. Cystine bridges form between Cys-37–Cys-60 and Cys-38–Cys-76.

The protein belongs to the intercrine beta (chemokine CC) family. As to expression, mainly expressed in liver, also found in spleen and thymus. Highly expressed in LPS- and IFN-gamma-activated monocytes, weakly in some lymphocytes, including natural killer cells, gamma-delta T-cells, and some T-cell clones.

The protein localises to the secreted. Functionally, shows chemotactic activity for lymphocytes and monocytes but not neutrophils. Also shows potent myelosuppressive activity, suppresses proliferation of myeloid progenitor cells. Recombinant SCYA16 shows chemotactic activity for monocytes and THP-1 monocytes, but not for resting lymphocytes and neutrophils. Induces a calcium flux in THP-1 cells that were desensitized by prior expression to RANTES. The protein is C-C motif chemokine 16 (CCL16) of Homo sapiens (Human).